The following is a 179-amino-acid chain: MKEKIISEINLDLVFQCNDFSQFSNKLKDSKTKLIFESIFWEKVFLSWINTILKKEDYELPYYIFEKKSFSLGLQIISNQEIASLNKKWMQKNGPTDVLSFPIISDESLNNLDQIELGDIFISLEMALEQSYEYKHSIYREMIWLASHGFLHLLGWEHNNEHDLENMLNFQEYLITRLN.

The Zn(2+) site is built by H148, H152, and H158.

This sequence belongs to the endoribonuclease YbeY family. It depends on Zn(2+) as a cofactor.

It is found in the cytoplasm. Single strand-specific metallo-endoribonuclease involved in late-stage 70S ribosome quality control and in maturation of the 3' terminus of the 16S rRNA. In Prochlorococcus marinus (strain MIT 9312), this protein is Endoribonuclease YbeY.